The primary structure comprises 118 residues: Holo-[acyl-carrier-protein] synthase (118 aa).

Residues aspartate 8 and glutamate 58 each contribute to the Mg(2+) site.

The protein belongs to the P-Pant transferase superfamily. AcpS family. The cofactor is Mg(2+).

Its subcellular location is the cytoplasm. It catalyses the reaction apo-[ACP] + CoA = holo-[ACP] + adenosine 3',5'-bisphosphate + H(+). Transfers the 4'-phosphopantetheine moiety from coenzyme A to a Ser of acyl-carrier-protein. This is Holo-[acyl-carrier-protein] synthase from Streptococcus equi subsp. zooepidemicus (strain MGCS10565).